The chain runs to 344 residues: Phenylalanine--tRNA ligase alpha subunit (344 aa).

Residue Glu-256 participates in Mg(2+) binding.

This sequence belongs to the class-II aminoacyl-tRNA synthetase family. Phe-tRNA synthetase alpha subunit type 1 subfamily. In terms of assembly, tetramer of two alpha and two beta subunits. Mg(2+) is required as a cofactor.

It localises to the cytoplasm. The catalysed reaction is tRNA(Phe) + L-phenylalanine + ATP = L-phenylalanyl-tRNA(Phe) + AMP + diphosphate + H(+). This Bacillus cytotoxicus (strain DSM 22905 / CIP 110041 / 391-98 / NVH 391-98) protein is Phenylalanine--tRNA ligase alpha subunit.